Reading from the N-terminus, the 133-residue chain is Nucleoid-associated protein Mb3743c (133 aa).

Residues 98 to 133 (GAMRPPAPPAAPPGAPGMPGMPGMPGAPGAPPVPGI) are disordered. Over residues 102 to 113 (PPAPPAAPPGAP) the composition is skewed to pro residues.

Belongs to the YbaB/EbfC family. In terms of assembly, homodimer.

It localises to the cytoplasm. The protein resides in the nucleoid. In terms of biological role, binds to DNA and alters its conformation. May be involved in regulation of gene expression, nucleoid organization and DNA protection. This is Nucleoid-associated protein Mb3743c from Mycobacterium bovis (strain ATCC BAA-935 / AF2122/97).